A 160-amino-acid polypeptide reads, in one-letter code: Transcription elongation factor GreA 2 (160 aa).

Positions M9–Q73 form a coiled coil.

Belongs to the GreA/GreB family.

Functionally, necessary for efficient RNA polymerase transcription elongation past template-encoded arresting sites. The arresting sites in DNA have the property of trapping a certain fraction of elongating RNA polymerases that pass through, resulting in locked ternary complexes. Cleavage of the nascent transcript by cleavage factors such as GreA or GreB allows the resumption of elongation from the new 3'terminus. GreA releases sequences of 2 to 3 nucleotides. This Lactiplantibacillus plantarum (strain ATCC BAA-793 / NCIMB 8826 / WCFS1) (Lactobacillus plantarum) protein is Transcription elongation factor GreA 2.